A 245-amino-acid polypeptide reads, in one-letter code: Ribosomal RNA small subunit methyltransferase G (245 aa).

Residues glycine 79, phenylalanine 84, 130–131 (AE), and arginine 150 contribute to the S-adenosyl-L-methionine site.

It belongs to the methyltransferase superfamily. RNA methyltransferase RsmG family.

It localises to the cytoplasm. Specifically methylates the N7 position of a guanine in 16S rRNA. This Limosilactobacillus fermentum (strain NBRC 3956 / LMG 18251) (Lactobacillus fermentum) protein is Ribosomal RNA small subunit methyltransferase G.